A 258-amino-acid chain; its full sequence is Dihydroorotate dehydrogenase B (NAD(+)), electron transfer subunit (258 aa).

An FAD-binding FR-type domain is found at 1–101 (MKKAYLTVVS…LGPLGNGYDP (101 aa)). Residues 52–55 (RPIS), 69–71 (IYR), and 76–77 (GT) each bind FAD. [2Fe-2S] cluster contacts are provided by Cys-220, Cys-225, Cys-228, and Cys-243.

The protein belongs to the PyrK family. In terms of assembly, heterotetramer of 2 PyrK and 2 PyrD type B subunits. It depends on [2Fe-2S] cluster as a cofactor. FAD is required as a cofactor.

Its pathway is pyrimidine metabolism; UMP biosynthesis via de novo pathway; orotate from (S)-dihydroorotate (NAD(+) route): step 1/1. In terms of biological role, responsible for channeling the electrons from the oxidation of dihydroorotate from the FMN redox center in the PyrD type B subunit to the ultimate electron acceptor NAD(+). This Bacillus pumilus (strain SAFR-032) protein is Dihydroorotate dehydrogenase B (NAD(+)), electron transfer subunit.